A 218-amino-acid chain; its full sequence is 2-C-methyl-D-erythritol 4-phosphate cytidylyltransferase (218 aa).

The protein belongs to the IspD/TarI cytidylyltransferase family. IspD subfamily.

It carries out the reaction 2-C-methyl-D-erythritol 4-phosphate + CTP + H(+) = 4-CDP-2-C-methyl-D-erythritol + diphosphate. It functions in the pathway isoprenoid biosynthesis; isopentenyl diphosphate biosynthesis via DXP pathway; isopentenyl diphosphate from 1-deoxy-D-xylulose 5-phosphate: step 2/6. Catalyzes the formation of 4-diphosphocytidyl-2-C-methyl-D-erythritol from CTP and 2-C-methyl-D-erythritol 4-phosphate (MEP). The polypeptide is 2-C-methyl-D-erythritol 4-phosphate cytidylyltransferase (Chlamydia muridarum (strain MoPn / Nigg)).